Reading from the N-terminus, the 531-residue chain is SWI/SNF-related matrix-associated actin-dependent regulator of chromatin subfamily D member 2 (531 aa).

Residues 20–85 (AVAAALGAPP…MSPGSRMPMA (66 aa)) form a disordered region. Residues 34-45 (PGMLPSPALRGP) show a composition bias toward low complexity. Asymmetric dimethylarginine is present on residues Arg81 and Arg104. Phosphoserine is present on Ser203. The segment at 205–226 (SKADGDNAGTAGTPGGTPAADK) is disordered. Positions 210-225 (DNAGTAGTPGGTPAAD) are enriched in low complexity. Thr217 carries the post-translational modification Phosphothreonine. Residue Lys226 forms a Glycyl lysine isopeptide (Lys-Gly) (interchain with G-Cter in SUMO2) linkage. Residues 306–383 (HQPPQYKLDP…PMKLAGLLQH (78 aa)) enclose the SWIB/MDM2 domain.

Belongs to the SMARCD family. As to quaternary structure, component of the multiprotein chromatin-remodeling complexes SWI/SNF: SWI/SNF-A (BAF), SWI/SNF-B (PBAF) and related complexes. The canonical complex contains a catalytic subunit (either SMARCA4/BRG1/BAF190A or SMARCA2/BRM/BAF190B), and at least SMARCE1, ACTL6A/BAF53, SMARCC1/BAF155, SMARCC2/BAF170, and SMARCB1/SNF5/BAF47. Other subunits specific to each of the complexes may also be present permitting several possible combinations developmentally and tissue specific. Component of the BAF complex, which includes at least actin (ACTB), ARID1A/BAF250A, ARID1B/BAF250B, SMARCA2/BRM, SMARCA4/BRG1, ACTL6A/BAF53, ACTL6B/BAF53B, SMARCE1/BAF57, SMARCC1/BAF155, SMARCC2/BAF170, SMARCB1/SNF5/INI1, and one or more SMARCD1/BAF60A, SMARCD2/BAF60B, or SMARCD3/BAF60C. In muscle cells, the BAF complex also contains DPF3. Component of the SWI/SNF-B (PBAF) chromatin remodeling complex, at least composed of SMARCA4/BRG1, SMARCB1/BAF47/SNF5, ACTL6A/BAF53A or ACTL6B/BAF53B, SMARCE1/BAF57, SMARCD1/BAF60A, SMARCD2/BAF60B, perhaps SMARCD3/BAF60C, SMARCC1/BAF155, SMARCC2/BAF170, PBRM1/BAF180, ARID2/BAF200 and actin (ACTB). Interacts with UNKL. Interacts with CEBPE. In terms of processing, ubiquitinated through a signaling process involving RAC1 and the RING finger protein UNKL.

It is found in the nucleus. Its function is as follows. Involved in transcriptional activation and repression of select genes by chromatin remodeling (alteration of DNA-nucleosome topology). Component of SWI/SNF chromatin remodeling complexes that carry out key enzymatic activities, changing chromatin structure by altering DNA-histone contacts within a nucleosome in an ATP-dependent manner. Critical regulator of myeloid differentiation, controlling granulocytopoiesis and the expression of genes involved in neutrophil granule formation. This chain is SWI/SNF-related matrix-associated actin-dependent regulator of chromatin subfamily D member 2 (Smarcd2), found in Mus musculus (Mouse).